Consider the following 131-residue polypeptide: uncharacterized protein (131 aa).

The segment at 99-131 (NAIQEEEIDMEQQEEKEEKPREKGKKKSVEEEF) is disordered. Residues 102-113 (QEEEIDMEQQEE) show a composition bias toward acidic residues. Positions 114 to 131 (KEEKPREKGKKKSVEEEF) are enriched in basic and acidic residues.

This is an uncharacterized protein from Sulfolobus islandicus rod-shaped virus 1 (SIRV-1).